We begin with the raw amino-acid sequence, 224 residues long: Small ribosomal subunit protein uS2 (224 aa).

The segment covering Met-1–Val-14 has biased composition (basic and acidic residues). Residues Met-1–Gly-32 are disordered.

It belongs to the universal ribosomal protein uS2 family.

In Methanosarcina mazei (strain ATCC BAA-159 / DSM 3647 / Goe1 / Go1 / JCM 11833 / OCM 88) (Methanosarcina frisia), this protein is Small ribosomal subunit protein uS2.